The primary structure comprises 165 residues: Nascent polypeptide-associated complex subunit beta (165 aa).

2 disordered regions span residues 1–34 (MDQA…TSGA) and 133–165 (QNMQ…KSVD). Over residues 20-30 (TPRRKVKKVHK) the composition is skewed to basic residues. Residues 33-110 (GADDKKLQAT…GEEKELTELV (78 aa)) enclose the NAC-A/B domain. A compositionally biased stretch (acidic residues) spans 145 to 158 (DDDEDDIPDLVEGE).

This sequence belongs to the NAC-beta family. Part of the nascent polypeptide-associated complex (NAC), consisting of egd2 and egd1. NAC associates with ribosomes via egd1.

Its subcellular location is the cytoplasm. It is found in the nucleus. Its function is as follows. Component of the nascent polypeptide-associated complex (NAC), a dynamic component of the ribosomal exit tunnel, protecting the emerging polypeptides from interaction with other cytoplasmic proteins to ensure appropriate nascent protein targeting. The NAC complex also promotes mitochondrial protein import by enhancing productive ribosome interactions with the outer mitochondrial membrane and blocks the inappropriate interaction of ribosomes translating non-secretory nascent polypeptides with translocation sites in the membrane of the endoplasmic reticulum. EGD1 may act as a transcription factor that exert a negative effect on the expression of several genes that are transcribed by RNA polymerase II. This Emericella nidulans (strain FGSC A4 / ATCC 38163 / CBS 112.46 / NRRL 194 / M139) (Aspergillus nidulans) protein is Nascent polypeptide-associated complex subunit beta (egd1).